We begin with the raw amino-acid sequence, 312 residues long: Taste receptor type 2 member 103 (312 aa).

The Extracellular segment spans residues 1 to 16; it reads MVVTMRAALRLMLIST. The chain crosses the membrane as a helical span at residues 17–37; sequence VSLELIIGILANVFIALVNII. Residues 38–65 are Cytoplasmic-facing; that stretch reads DWIKRGKISAVDKIYMGLAISRTAFVLS. The chain crosses the membrane as a helical span at residues 66–86; it reads VITGFLIAFLDPASLGIGIMI. Residues 87-92 lie on the Extracellular side of the membrane; it reads RLLTMS. A helical transmembrane segment spans residues 93 to 113; the sequence is WTVTNHFSVWFATCLSIFYFL. Residues 114-133 lie on the Cytoplasmic side of the membrane; the sequence is KITNFSNTVFLALKWKVKKV. The chain crosses the membrane as a helical span at residues 134-154; the sequence is VSVTLVVSLIILFINVIVIHI. Residues 155-184 lie on the Extracellular side of the membrane; that stretch reads YTDRFQVNMVQKCGANNTLRAYGLFLSIST. The N-linked (GlcNAc...) asparagine glycan is linked to Asn-170. Residues 185-205 form a helical membrane-spanning segment; the sequence is VFTFIPFTASLTMFLLLIFSL. The Cytoplasmic portion of the chain corresponds to 206-229; sequence WRHLKTMHHNATGSRDVSTVAHIK. A helical membrane pass occupies residues 230-250; sequence GLQTVVAFLLLYTVFAMSLFS. The Extracellular portion of the chain corresponds to 251-264; that stretch reads QSLSIDAQHTNLLS. The chain crosses the membrane as a helical span at residues 265-285; the sequence is HFLRCIGVAFPSGHSCALILG. Topologically, residues 286 to 312 are cytoplasmic; the sequence is NNKLRQASLSVIFWLRCKYKHTENQGP.

This sequence belongs to the G-protein coupled receptor T2R family.

The protein resides in the membrane. Its function is as follows. Gustducin-coupled receptor implicated in the perception of bitter compounds in the oral cavity and the gastrointestinal tract. Signals through PLCB2 and the calcium-regulated cation channel TRPM5. This Rattus norvegicus (Rat) protein is Taste receptor type 2 member 103.